Here is a 219-residue protein sequence, read N- to C-terminus: Probable GTP-binding protein EngB (219 aa).

The region spanning 26-200 is the EngB-type G domain; sequence EGVEIAFAGR…RAKLDTWFAP (175 aa). GTP-binding positions include 34–41, 61–65, 79–82, 146–149, and 179–181; these read GRSNAGKS, GRTQL, DLPG, TKAD, and FSS. Residues S41 and T63 each coordinate Mg(2+).

The protein belongs to the TRAFAC class TrmE-Era-EngA-EngB-Septin-like GTPase superfamily. EngB GTPase family. Requires Mg(2+) as cofactor.

Necessary for normal cell division and for the maintenance of normal septation. This is Probable GTP-binding protein EngB from Vibrio parahaemolyticus serotype O3:K6 (strain RIMD 2210633).